A 563-amino-acid polypeptide reads, in one-letter code: Chaperonin GroEL 1 (563 aa).

ATP-binding positions include Thr-29–Pro-32, Asp-86–Thr-90, Gly-413, and Asp-492. The disordered stretch occupies residues Asp-520–Gly-541. Over residues Ala-530–Gly-541 the composition is skewed to gly residues.

The protein belongs to the chaperonin (HSP60) family. As to quaternary structure, forms a cylinder of 14 subunits composed of two heptameric rings stacked back-to-back. Interacts with the co-chaperonin GroES.

Its subcellular location is the cytoplasm. The enzyme catalyses ATP + H2O + a folded polypeptide = ADP + phosphate + an unfolded polypeptide.. Functionally, together with its co-chaperonin GroES, plays an essential role in assisting protein folding. The GroEL-GroES system forms a nano-cage that allows encapsulation of the non-native substrate proteins and provides a physical environment optimized to promote and accelerate protein folding. The protein is Chaperonin GroEL 1 of Prochlorococcus marinus (strain NATL1A).